The sequence spans 78 residues: Defensin-like protein 141 (78 aa).

The first 24 residues, 1–24 (MTKSIISAFFIILILGMMVNEIEG), serve as a signal peptide directing secretion. Cystine bridges form between Cys31-Cys76, Cys40-Cys59, Cys45-Cys70, and Cys49-Cys72.

The protein belongs to the DEFL family.

It localises to the secreted. This chain is Defensin-like protein 141 (LCR3), found in Arabidopsis thaliana (Mouse-ear cress).